A 126-amino-acid polypeptide reads, in one-letter code: Large ribosomal subunit protein bL17 (126 aa).

The protein belongs to the bacterial ribosomal protein bL17 family. As to quaternary structure, part of the 50S ribosomal subunit. Contacts protein L32.

This is Large ribosomal subunit protein bL17 from Lactococcus lactis subsp. lactis (strain IL1403) (Streptococcus lactis).